The primary structure comprises 303 residues: Ribosomal protein L11 methyltransferase (303 aa).

The S-adenosyl-L-methionine site is built by Thr-152, Gly-173, Asp-195, and Asn-239.

The protein belongs to the methyltransferase superfamily. PrmA family.

Its subcellular location is the cytoplasm. It catalyses the reaction L-lysyl-[protein] + 3 S-adenosyl-L-methionine = N(6),N(6),N(6)-trimethyl-L-lysyl-[protein] + 3 S-adenosyl-L-homocysteine + 3 H(+). Functionally, methylates ribosomal protein L11. This is Ribosomal protein L11 methyltransferase from Desulforapulum autotrophicum (strain ATCC 43914 / DSM 3382 / VKM B-1955 / HRM2) (Desulfobacterium autotrophicum).